Consider the following 352-residue polypeptide: Alanine racemase (352 aa).

Lys-34 serves as the catalytic Proton acceptor; specific for D-alanine. The residue at position 34 (Lys-34) is an N6-(pyridoxal phosphate)lysine. Arg-126 is a binding site for substrate. Tyr-248 functions as the Proton acceptor; specific for L-alanine in the catalytic mechanism. Residue Met-296 participates in substrate binding.

This sequence belongs to the alanine racemase family. It depends on pyridoxal 5'-phosphate as a cofactor.

It carries out the reaction L-alanine = D-alanine. It functions in the pathway amino-acid biosynthesis; D-alanine biosynthesis; D-alanine from L-alanine: step 1/1. In terms of biological role, catalyzes the interconversion of L-alanine and D-alanine. May also act on other amino acids. The polypeptide is Alanine racemase (alr) (Deinococcus deserti (strain DSM 17065 / CIP 109153 / LMG 22923 / VCD115)).